The sequence spans 392 residues: Dual-specificity RNA methyltransferase RlmN (392 aa).

Glutamate 116 (proton acceptor) is an active-site residue. The region spanning 122-364 is the Radical SAM core domain; it reads EEGRGTLCVS…SPIRTPRGED (243 aa). Cysteine 129 and cysteine 369 form a disulfide bridge. [4Fe-4S] cluster-binding residues include cysteine 136, cysteine 140, and cysteine 143. S-adenosyl-L-methionine-binding positions include 195–196, serine 227, 249–251, and asparagine 326; these read GE and SFH. The active-site S-methylcysteine intermediate is cysteine 369.

It belongs to the radical SAM superfamily. RlmN family. It depends on [4Fe-4S] cluster as a cofactor.

It localises to the cytoplasm. The enzyme catalyses adenosine(2503) in 23S rRNA + 2 reduced [2Fe-2S]-[ferredoxin] + 2 S-adenosyl-L-methionine = 2-methyladenosine(2503) in 23S rRNA + 5'-deoxyadenosine + L-methionine + 2 oxidized [2Fe-2S]-[ferredoxin] + S-adenosyl-L-homocysteine. It carries out the reaction adenosine(37) in tRNA + 2 reduced [2Fe-2S]-[ferredoxin] + 2 S-adenosyl-L-methionine = 2-methyladenosine(37) in tRNA + 5'-deoxyadenosine + L-methionine + 2 oxidized [2Fe-2S]-[ferredoxin] + S-adenosyl-L-homocysteine. In terms of biological role, specifically methylates position 2 of adenine 2503 in 23S rRNA and position 2 of adenine 37 in tRNAs. m2A2503 modification seems to play a crucial role in the proofreading step occurring at the peptidyl transferase center and thus would serve to optimize ribosomal fidelity. In Cereibacter sphaeroides (strain ATCC 17029 / ATH 2.4.9) (Rhodobacter sphaeroides), this protein is Dual-specificity RNA methyltransferase RlmN.